Here is a 394-residue protein sequence, read N- to C-terminus: Small ribosomal subunit protein uS2m (394 aa).

The transit peptide at 1–25 (MQRHVFARNFRRLSLLRNPSLTKRF) directs the protein to the mitochondrion.

It belongs to the universal ribosomal protein uS2 family. Component of the mitochondrial small ribosomal subunit (mt-SSU). Mature yeast 74S mitochondrial ribosomes consist of a small (37S) and a large (54S) subunit. The 37S small subunit contains a 15S ribosomal RNA (15S mt-rRNA) and 34 different proteins. The 54S large subunit contains a 21S rRNA (21S mt-rRNA) and 46 different proteins.

It is found in the mitochondrion. In terms of biological role, component of the mitochondrial ribosome (mitoribosome), a dedicated translation machinery responsible for the synthesis of mitochondrial genome-encoded proteins, including at least some of the essential transmembrane subunits of the mitochondrial respiratory chain. The mitoribosomes are attached to the mitochondrial inner membrane and translation products are cotranslationally integrated into the membrane. The sequence is that of Small ribosomal subunit protein uS2m (MRP4) from Saccharomyces cerevisiae (strain ATCC 204508 / S288c) (Baker's yeast).